The primary structure comprises 585 residues: Butyrophilin subfamily 3 member A3 (585 aa).

A signal peptide spans 1–29 (MKMASSLACLLLNFHVSVFLVQLLTPCSA). Ig-like V-type domains are found at residues 30–139 (QFSV…KALV) and 145–236 (ALGS…ASIS). Topologically, residues 30–248 (QFSVLGPSGP…DPFFTSAQPW (219 aa)) are extracellular. 2 disulfides stabilise this stretch: cysteine 52–cysteine 126 and cysteine 166–cysteine 220. The N-linked (GlcNAc...) asparagine glycan is linked to asparagine 115. A helical membrane pass occupies residues 249-269 (IAALAGTLPISLLLLAGASYF). Over 270 to 585 (LWRQQKEKIA…KPQACTEALY (316 aa)) the chain is Cytoplasmic. A B30.2/SPRY domain is found at 322-518 (RGEKSLAYHE…LTICPTPKEV (197 aa)). The interval 560–585 (AGAEGVSPSTTTSQNHKPQACTEALY) is disordered. Residues 566–576 (SPSTTTSQNHK) are compositionally biased toward polar residues.

This sequence belongs to the immunoglobulin superfamily. BTN/MOG family.

Its subcellular location is the membrane. This is Butyrophilin subfamily 3 member A3 (BTN3A3) from Pongo abelii (Sumatran orangutan).